Consider the following 115-residue polypeptide: NADH-ubiquinone oxidoreductase chain 3 (115 aa).

3 consecutive transmembrane segments (helical) span residues 3–23, 55–75, and 87–107; these read LMLT…IAFW, FFLV…LLPL, and VLFM…YEWI.

Belongs to the complex I subunit 3 family. As to quaternary structure, core subunit of respiratory chain NADH dehydrogenase (Complex I) which is composed of 45 different subunits. Interacts with TMEM186. Interacts with TMEM242.

The protein localises to the mitochondrion inner membrane. It catalyses the reaction a ubiquinone + NADH + 5 H(+)(in) = a ubiquinol + NAD(+) + 4 H(+)(out). Its function is as follows. Core subunit of the mitochondrial membrane respiratory chain NADH dehydrogenase (Complex I) which catalyzes electron transfer from NADH through the respiratory chain, using ubiquinone as an electron acceptor. Essential for the catalytic activity of complex I. The protein is NADH-ubiquinone oxidoreductase chain 3 of Dugong dugon (Dugong).